A 685-amino-acid polypeptide reads, in one-letter code: Cilia- and flagella-associated protein 36 (685 aa).

Positions 1–20 are disordered; it reads MLRRFSKKNKNPEGGSDDAS. A coiled-coil region spans residues 197–242; it reads SEELEMMAQNSRIQREALEQEIRKEEILLQQALDEGARAQNQNQNQ. Positions 287–310 are enriched in low complexity; the sequence is TGTMTSSTGVSVGTLTNTGVSSGT. The segment at 287 to 573 is disordered; it reads TGTMTSSTGV…LRGNKYDGDV (287 aa). Residues 363 to 372 show a composition bias toward basic and acidic residues; sequence EAEKSKRERP. The segment covering 410–434 has biased composition (polar residues); it reads GTTSKKSIATVTASPEMSSKTTQME. Composition is skewed to basic and acidic residues over residues 439–456 and 508–557; these read GEGK…ERKY and HEPR…ESKP.

Belongs to the CFAP36 family. As to expression, expressed in amphid and phasmid ciliated neurons.

It localises to the cell projection. It is found in the cilium. The protein localises to the cytoplasm. The protein resides in the cytoskeleton. Its subcellular location is the cilium axoneme. The sequence is that of Cilia- and flagella-associated protein 36 from Caenorhabditis elegans.